Reading from the N-terminus, the 65-residue chain is U15-hexatoxin-Mg1b (65 aa).

Post-translationally, contains 4 disulfide bonds. In terms of tissue distribution, expressed by the venom gland.

It localises to the secreted. In terms of biological role, in vivo, intrathorax injection into crickets causes death. This Macrothele gigas (Japanese funnel web spider) protein is U15-hexatoxin-Mg1b.